The sequence spans 3587 residues: Surfactin synthase subunit 1 (3587 aa).

Carrier domains are found at residues 971–1046 (APRN…DHRE), 2010–2085 (APRN…ASAE), and 3038–3112 (APTT…ERAE). Ser1006, Ser2045, and Ser3073 each carry O-(pantetheine 4'-phosphoryl)serine.

It belongs to the ATP-dependent AMP-binding enzyme family. It depends on pantetheine 4'-phosphate as a cofactor.

Its pathway is antibiotic biosynthesis; surfactin biosynthesis. Functionally, this protein is a multifunctional enzyme able to activate and polymerize the amino acids Leu, Glu, Asp and Val. Activation sites for these AA consist of individual domains. This Bacillus subtilis (strain 168) protein is Surfactin synthase subunit 1 (srfAA).